The sequence spans 330 residues: Probable allantoicase (330 aa).

Belongs to the allantoicase family.

It catalyses the reaction allantoate + H2O = (S)-ureidoglycolate + urea. It functions in the pathway nitrogen metabolism; (S)-allantoin degradation; (S)-ureidoglycolate from allantoate (aminidohydrolase route): step 1/1. This Photobacterium profundum (strain SS9) protein is Probable allantoicase.